An 802-amino-acid polypeptide reads, in one-letter code: Leucine--tRNA ligase (802 aa).

Positions 40-51 (PYPSGAGLHVGH) match the 'HIGH' region motif. Residues 576-580 (KMSKS) carry the 'KMSKS' region motif. Lys-579 is an ATP binding site.

The protein belongs to the class-I aminoacyl-tRNA synthetase family.

Its subcellular location is the cytoplasm. It catalyses the reaction tRNA(Leu) + L-leucine + ATP = L-leucyl-tRNA(Leu) + AMP + diphosphate. The protein is Leucine--tRNA ligase of Bacillus thuringiensis subsp. konkukian (strain 97-27).